A 342-amino-acid chain; its full sequence is Glyceraldehyde-3-phosphate dehydrogenase (342 aa).

NAD(+)-binding positions include 12-13 (RI), Asp34, Lys78, and Thr120. D-glyceraldehyde 3-phosphate contacts are provided by residues 151 to 153 (SCT) and Thr182. The active-site Nucleophile is the Cys152. NAD(+) is bound at residue Asn183. D-glyceraldehyde 3-phosphate is bound by residues Arg197, 210 to 211 (TG), and Arg233. An NAD(+)-binding site is contributed by Asn322.

The protein belongs to the glyceraldehyde-3-phosphate dehydrogenase family. In terms of assembly, homotetramer.

It localises to the cytoplasm. It carries out the reaction D-glyceraldehyde 3-phosphate + phosphate + NAD(+) = (2R)-3-phospho-glyceroyl phosphate + NADH + H(+). Its pathway is carbohydrate degradation; glycolysis; pyruvate from D-glyceraldehyde 3-phosphate: step 1/5. In terms of biological role, catalyzes the oxidative phosphorylation of glyceraldehyde 3-phosphate (G3P) to 1,3-bisphosphoglycerate (BPG) using the cofactor NAD. The first reaction step involves the formation of a hemiacetal intermediate between G3P and a cysteine residue, and this hemiacetal intermediate is then oxidized to a thioester, with concomitant reduction of NAD to NADH. The reduced NADH is then exchanged with the second NAD, and the thioester is attacked by a nucleophilic inorganic phosphate to produce BPG. The chain is Glyceraldehyde-3-phosphate dehydrogenase (gap) from Aquifex aeolicus (strain VF5).